Here is a 185-residue protein sequence, read N- to C-terminus: Elongation factor P (185 aa).

This sequence belongs to the elongation factor P family.

The protein localises to the cytoplasm. It functions in the pathway protein biosynthesis; polypeptide chain elongation. Involved in peptide bond synthesis. Stimulates efficient translation and peptide-bond synthesis on native or reconstituted 70S ribosomes in vitro. Probably functions indirectly by altering the affinity of the ribosome for aminoacyl-tRNA, thus increasing their reactivity as acceptors for peptidyl transferase. The polypeptide is Elongation factor P (Paraburkholderia xenovorans (strain LB400)).